The following is a 294-amino-acid chain: 33 kDa chaperonin (294 aa).

2 disulfides stabilise this stretch: C238/C240 and C271/C274.

Belongs to the HSP33 family. In terms of processing, under oxidizing conditions two disulfide bonds are formed involving the reactive cysteines. Under reducing conditions zinc is bound to the reactive cysteines and the protein is inactive.

Its subcellular location is the cytoplasm. Redox regulated molecular chaperone. Protects both thermally unfolding and oxidatively damaged proteins from irreversible aggregation. Plays an important role in the bacterial defense system toward oxidative stress. This Staphylococcus haemolyticus (strain JCSC1435) protein is 33 kDa chaperonin.